The sequence spans 158 residues: MLRVGIGYDVHALVAGRPLILAGIDIPHEKGLLGHSDADVLTHTLMDALLGALALGDLGKHFPDTDERYRGISSMKLLEQVMKLLEERGYAIGNIDCIIAAQRPKLAPYIPQMRENLARALKTDLENVSVKATTTERLGFEGREEGISSQAIVCLVKV.

Residues D9 and H11 each coordinate a divalent metal cation. 4-CDP-2-C-methyl-D-erythritol 2-phosphate is bound by residues 9–11 and 35–36; these read DVH and HS. H43 is an a divalent metal cation binding site. 4-CDP-2-C-methyl-D-erythritol 2-phosphate contacts are provided by residues 57 to 59, 62 to 66, 133 to 136, F140, and R143; these read DLG, FPDTD, and TTTE.

It belongs to the IspF family. Homotrimer. A divalent metal cation is required as a cofactor.

The catalysed reaction is 4-CDP-2-C-methyl-D-erythritol 2-phosphate = 2-C-methyl-D-erythritol 2,4-cyclic diphosphate + CMP. It participates in isoprenoid biosynthesis; isopentenyl diphosphate biosynthesis via DXP pathway; isopentenyl diphosphate from 1-deoxy-D-xylulose 5-phosphate: step 4/6. Functionally, involved in the biosynthesis of isopentenyl diphosphate (IPP) and dimethylallyl diphosphate (DMAPP), two major building blocks of isoprenoid compounds. Catalyzes the conversion of 4-diphosphocytidyl-2-C-methyl-D-erythritol 2-phosphate (CDP-ME2P) to 2-C-methyl-D-erythritol 2,4-cyclodiphosphate (ME-CPP) with a corresponding release of cytidine 5-monophosphate (CMP). This chain is 2-C-methyl-D-erythritol 2,4-cyclodiphosphate synthase, found in Desulfitobacterium hafniense (strain DSM 10664 / DCB-2).